We begin with the raw amino-acid sequence, 208 residues long: Uracil phosphoribosyltransferase (208 aa).

Residues R77, R102, and 129–137 (DPMLATGNS) contribute to the 5-phospho-alpha-D-ribose 1-diphosphate site. Uracil contacts are provided by residues I193 and 198 to 200 (GDA). D199 is a binding site for 5-phospho-alpha-D-ribose 1-diphosphate.

It belongs to the UPRTase family. The cofactor is Mg(2+).

The catalysed reaction is UMP + diphosphate = 5-phospho-alpha-D-ribose 1-diphosphate + uracil. Its pathway is pyrimidine metabolism; UMP biosynthesis via salvage pathway; UMP from uracil: step 1/1. With respect to regulation, allosterically activated by GTP. In terms of biological role, catalyzes the conversion of uracil and 5-phospho-alpha-D-ribose 1-diphosphate (PRPP) to UMP and diphosphate. The sequence is that of Uracil phosphoribosyltransferase from Mycoplasmopsis agalactiae (strain NCTC 10123 / CIP 59.7 / PG2) (Mycoplasma agalactiae).